Here is a 340-residue protein sequence, read N- to C-terminus: Glycerol-3-phosphate dehydrogenase [NAD(P)+] (340 aa).

NADPH contacts are provided by Ser-14, Phe-15, Arg-35, and Lys-109. Residues Lys-109 and Gly-137 each coordinate sn-glycerol 3-phosphate. Ala-141 contacts NADPH. Residues Lys-192, Asp-245, Ser-255, Arg-256, and Asn-257 each contribute to the sn-glycerol 3-phosphate site. Residue Lys-192 is the Proton acceptor of the active site. Arg-256 is an NADPH binding site. NADPH contacts are provided by Val-280 and Glu-282.

It belongs to the NAD-dependent glycerol-3-phosphate dehydrogenase family.

The protein localises to the cytoplasm. The enzyme catalyses sn-glycerol 3-phosphate + NAD(+) = dihydroxyacetone phosphate + NADH + H(+). It catalyses the reaction sn-glycerol 3-phosphate + NADP(+) = dihydroxyacetone phosphate + NADPH + H(+). The protein operates within membrane lipid metabolism; glycerophospholipid metabolism. Catalyzes the reduction of the glycolytic intermediate dihydroxyacetone phosphate (DHAP) to sn-glycerol 3-phosphate (G3P), the key precursor for phospholipid synthesis. The sequence is that of Glycerol-3-phosphate dehydrogenase [NAD(P)+] from Teredinibacter turnerae (strain ATCC 39867 / T7901).